We begin with the raw amino-acid sequence, 370 residues long: Flagellar P-ring protein (370 aa).

Residues 1 to 21 form the signal peptide; sequence MKLLLFILMISSIIIVPVGQA.

Belongs to the FlgI family. As to quaternary structure, the basal body constitutes a major portion of the flagellar organelle and consists of four rings (L,P,S, and M) mounted on a central rod.

It is found in the periplasm. It localises to the bacterial flagellum basal body. In terms of biological role, assembles around the rod to form the L-ring and probably protects the motor/basal body from shearing forces during rotation. The polypeptide is Flagellar P-ring protein (Pseudoalteromonas atlantica (strain T6c / ATCC BAA-1087)).